Reading from the N-terminus, the 82-residue chain is Envelope small membrane protein (82 aa).

Topologically, residues 1 to 19 (MTFPRAFTIIDDHGMVVSV) are virion surface. The helical transmembrane segment at 20–40 (FFWLLLIIILILFSIALLNVI) threads the bilayer. Residues 41-82 (KLCMVCCNLGKTIIVLPARHAYDAYKTFMQTKAYNPDEAFLV) lie on the Intravirion side of the membrane.

Belongs to the alphacoronaviruses E protein family. Homopentamer. Interacts with membrane protein M in the budding compartment of the host cell, which is located between endoplasmic reticulum and the Golgi complex. Interacts with Nucleoprotein.

It localises to the host Golgi apparatus membrane. Its function is as follows. Plays a central role in virus morphogenesis and assembly. Acts as a viroporin and self-assembles in host membranes forming pentameric protein-lipid pores that allow ion transport. Also plays a role in the induction of apoptosis. This is Envelope small membrane protein from Feline coronavirus (strain FIPV WSU-79/1146) (FCoV).